The chain runs to 337 residues: Large ribosomal subunit protein uL3 (337 aa).

Residues methionine 1–serine 29 form a disordered region.

It belongs to the universal ribosomal protein uL3 family. As to quaternary structure, part of the 50S ribosomal subunit. Forms a cluster with proteins L14 and L24e.

Functionally, one of the primary rRNA binding proteins, it binds directly near the 3'-end of the 23S rRNA, where it nucleates assembly of the 50S subunit. This Methanothermobacter thermautotrophicus (strain ATCC 29096 / DSM 1053 / JCM 10044 / NBRC 100330 / Delta H) (Methanobacterium thermoautotrophicum) protein is Large ribosomal subunit protein uL3.